The following is a 92-amino-acid chain: Small ribosomal subunit protein uS19 (92 aa).

This sequence belongs to the universal ribosomal protein uS19 family.

Protein S19 forms a complex with S13 that binds strongly to the 16S ribosomal RNA. This Methylorubrum extorquens (strain CM4 / NCIMB 13688) (Methylobacterium extorquens) protein is Small ribosomal subunit protein uS19.